A 161-amino-acid chain; its full sequence is Nucleotide-binding protein Veis_3464 (161 aa).

This sequence belongs to the YajQ family.

Nucleotide-binding protein. This Verminephrobacter eiseniae (strain EF01-2) protein is Nucleotide-binding protein Veis_3464.